We begin with the raw amino-acid sequence, 172 residues long: Transmembrane protein 91 (172 aa).

2 disordered regions span residues 1 to 31 (MDSPSLRELQQPLLEGTECETPAQKPGRHEL) and 55 to 83 (PSVSAGLGEPRPPDVEDMSSSDSDSDWDG). At 1–97 (MDSPSLRELQ…SPFLPHDHLG (97 aa)) the chain is on the extracellular side. Over residues 69-81 (VEDMSSSDSDSDW) the composition is skewed to acidic residues. A helical membrane pass occupies residues 98–118 (LAVFSMLCCFWPVGIAAFCLA). Residues 119 to 139 (QKTNKAWAKGDIQGAGAASRR) are Cytoplasmic-facing. Residues 140 to 160 (AFLLGVLAVGLGVCTYAAALV) traverse the membrane as a helical segment. Over 161 to 172 (TLAAYLASRDPP) the chain is Extracellular.

It belongs to the CD225/Dispanin family.

Its subcellular location is the membrane. The sequence is that of Transmembrane protein 91 (TMEM91) from Homo sapiens (Human).